The sequence spans 129 residues: Ribosome-binding factor A (129 aa).

This sequence belongs to the RbfA family. Monomer. Binds 30S ribosomal subunits, but not 50S ribosomal subunits or 70S ribosomes.

The protein resides in the cytoplasm. Its function is as follows. One of several proteins that assist in the late maturation steps of the functional core of the 30S ribosomal subunit. Associates with free 30S ribosomal subunits (but not with 30S subunits that are part of 70S ribosomes or polysomes). Required for efficient processing of 16S rRNA. May interact with the 5'-terminal helix region of 16S rRNA. This Thioalkalivibrio sulfidiphilus (strain HL-EbGR7) protein is Ribosome-binding factor A.